A 127-amino-acid polypeptide reads, in one-letter code: Copper resistance protein C (127 aa).

Residues 1 to 25 (MFAFRSIATTVVMVAASLASASAFA) form the signal peptide. Cu cation contacts are provided by His26, Met65, Met68, Met71, Met76, and His116.

It belongs to the CopC family.

It localises to the periplasm. In terms of biological role, copper-binding protein involved in copper resistance. In Xanthomonas campestris pv. juglandis (Xanthomonas arboricola pv. juglandis), this protein is Copper resistance protein C.